The primary structure comprises 185 residues: Ribosome-recycling factor (185 aa).

Belongs to the RRF family.

It is found in the cytoplasm. Functionally, responsible for the release of ribosomes from messenger RNA at the termination of protein biosynthesis. May increase the efficiency of translation by recycling ribosomes from one round of translation to another. The protein is Ribosome-recycling factor of Macrococcus caseolyticus (strain JCSC5402) (Macrococcoides caseolyticum).